A 361-amino-acid polypeptide reads, in one-letter code: UDP-N-acetylglucosamine--N-acetylmuramyl-(pentapeptide) pyrophosphoryl-undecaprenol N-acetylglucosamine transferase (361 aa).

UDP-N-acetyl-alpha-D-glucosamine is bound by residues S199 and Q290.

Belongs to the glycosyltransferase 28 family. MurG subfamily.

It is found in the cell membrane. The catalysed reaction is Mur2Ac(oyl-L-Ala-gamma-D-Glu-L-Lys-D-Ala-D-Ala)-di-trans,octa-cis-undecaprenyl diphosphate + UDP-N-acetyl-alpha-D-glucosamine = beta-D-GlcNAc-(1-&gt;4)-Mur2Ac(oyl-L-Ala-gamma-D-Glu-L-Lys-D-Ala-D-Ala)-di-trans,octa-cis-undecaprenyl diphosphate + UDP + H(+). The protein operates within cell wall biogenesis; peptidoglycan biosynthesis. Its function is as follows. Cell wall formation. Catalyzes the transfer of a GlcNAc subunit on undecaprenyl-pyrophosphoryl-MurNAc-pentapeptide (lipid intermediate I) to form undecaprenyl-pyrophosphoryl-MurNAc-(pentapeptide)GlcNAc (lipid intermediate II). In Streptococcus mutans serotype c (strain ATCC 700610 / UA159), this protein is UDP-N-acetylglucosamine--N-acetylmuramyl-(pentapeptide) pyrophosphoryl-undecaprenol N-acetylglucosamine transferase.